The primary structure comprises 161 residues: uncharacterized protein (161 aa).

The protein belongs to the mimivirus L761/L899 family.

The protein resides in the virion. This is an uncharacterized protein from Acanthamoeba polyphaga (Amoeba).